We begin with the raw amino-acid sequence, 160 residues long: MTNTKGKRRGTRYMFSRPFRKHGVVPLATYMRIYRKGDIVDIKGMGTVQKGMPHKCYHGKTGRVYNVTQHAVGIIVNKQVKGKILAKRINVRIEHIKHSKSRDSFLKRVKENDQKKKEAKEKGTWVQLKRQPAPPREAHFVRTNGKEPELLEPIPYEFMA.

Composition is skewed to basic and acidic residues over residues 112 to 123 (NDQKKKEAKEKG) and 136 to 145 (REAHFVRTNG). Residues 112-145 (NDQKKKEAKEKGTWVQLKRQPAPPREAHFVRTNG) are disordered.

It belongs to the eukaryotic ribosomal protein eL21 family. Component of the large ribosomal subunit.

It is found in the cytoplasm. The protein localises to the cytosol. The protein resides in the endoplasmic reticulum. Component of the large ribosomal subunit. The ribosome is a large ribonucleoprotein complex responsible for the synthesis of proteins in the cell. This Capra hircus (Goat) protein is Large ribosomal subunit protein eL21 (RPL21).